We begin with the raw amino-acid sequence, 246 residues long: High mobility group protein 1 (246 aa).

Residues 106–179 constitute a DNA-binding region (HMG box); sequence PKKPLTVFFA…NYQREKSKYL (74 aa). The segment at 179 to 246 is disordered; the sequence is LEAKKNGTLP…KKKDKSNSSI (68 aa). The span at 214-227 shows a compositional bias: basic and acidic residues; the sequence is PVEKRPHDDDGSSE. Over residues 228-238 the composition is skewed to basic residues; the sequence is KKKKKKKKDKK.

In terms of assembly, interacts with FPR1. Interacts with an unidentified DNA helicase. Associates with rDNA.

Its subcellular location is the nucleus. The protein localises to the nucleolus. Its function is as follows. DNA-binding protein that is probably part of the rDNA transcription apparatus. Acts synergetically with the RPA49 subunit of RNA polymerase I during rDNA transcription. May participate in mutagenesis control. This chain is High mobility group protein 1 (HMO1), found in Saccharomyces cerevisiae (strain ATCC 204508 / S288c) (Baker's yeast).